The following is a 122-amino-acid chain: Large ribosomal subunit protein uL14c (122 aa).

The protein belongs to the universal ribosomal protein uL14 family. As to quaternary structure, part of the 50S ribosomal subunit.

It localises to the plastid. The protein resides in the chloroplast. Its function is as follows. Binds to 23S rRNA. The sequence is that of Large ribosomal subunit protein uL14c from Tupiella akineta (Green alga).